A 776-amino-acid polypeptide reads, in one-letter code: Heat shock protein 110 (776 aa).

Positions 741 to 776 are disordered; that stretch reads ILNKKKPAAPAPPKKEEPQPAAGDQPQSQPGEMDVD.

Belongs to the heat shock protein 70 family.

In Caenorhabditis elegans, this protein is Heat shock protein 110.